A 157-amino-acid polypeptide reads, in one-letter code: 2-C-methyl-D-erythritol 2,4-cyclodiphosphate synthase (157 aa).

Residues D8 and H10 each coordinate a divalent metal cation. Residues D8–H10 and H34–S35 each bind 4-CDP-2-C-methyl-D-erythritol 2-phosphate. H42 is an a divalent metal cation binding site. Residues D56–G58, F61–E65, T132–E135, F139, and R142 contribute to the 4-CDP-2-C-methyl-D-erythritol 2-phosphate site.

Belongs to the IspF family. As to quaternary structure, homotrimer. A divalent metal cation is required as a cofactor.

The enzyme catalyses 4-CDP-2-C-methyl-D-erythritol 2-phosphate = 2-C-methyl-D-erythritol 2,4-cyclic diphosphate + CMP. The protein operates within isoprenoid biosynthesis; isopentenyl diphosphate biosynthesis via DXP pathway; isopentenyl diphosphate from 1-deoxy-D-xylulose 5-phosphate: step 4/6. Functionally, involved in the biosynthesis of isopentenyl diphosphate (IPP) and dimethylallyl diphosphate (DMAPP), two major building blocks of isoprenoid compounds. Catalyzes the conversion of 4-diphosphocytidyl-2-C-methyl-D-erythritol 2-phosphate (CDP-ME2P) to 2-C-methyl-D-erythritol 2,4-cyclodiphosphate (ME-CPP) with a corresponding release of cytidine 5-monophosphate (CMP). This is 2-C-methyl-D-erythritol 2,4-cyclodiphosphate synthase from Desulforamulus reducens (strain ATCC BAA-1160 / DSM 100696 / MI-1) (Desulfotomaculum reducens).